A 178-amino-acid chain; its full sequence is ATP synthase subunit delta (178 aa).

It belongs to the ATPase delta chain family. F-type ATPases have 2 components, F(1) - the catalytic core - and F(0) - the membrane proton channel. F(1) has five subunits: alpha(3), beta(3), gamma(1), delta(1), epsilon(1). F(0) has three main subunits: a(1), b(2) and c(10-14). The alpha and beta chains form an alternating ring which encloses part of the gamma chain. F(1) is attached to F(0) by a central stalk formed by the gamma and epsilon chains, while a peripheral stalk is formed by the delta and b chains.

It localises to the cell inner membrane. In terms of biological role, f(1)F(0) ATP synthase produces ATP from ADP in the presence of a proton or sodium gradient. F-type ATPases consist of two structural domains, F(1) containing the extramembraneous catalytic core and F(0) containing the membrane proton channel, linked together by a central stalk and a peripheral stalk. During catalysis, ATP synthesis in the catalytic domain of F(1) is coupled via a rotary mechanism of the central stalk subunits to proton translocation. This protein is part of the stalk that links CF(0) to CF(1). It either transmits conformational changes from CF(0) to CF(1) or is implicated in proton conduction. This is ATP synthase subunit delta from Pseudomonas aeruginosa (strain UCBPP-PA14).